Reading from the N-terminus, the 232-residue chain is LexA repressor (232 aa).

The interval 1–25 is disordered; that stretch reads MSDDSSDSTDAPGTSRSRDSGLTER. A compositionally biased stretch (basic and acidic residues) spans 16-25; that stretch reads RSRDSGLTER. Residues 46-66 constitute a DNA-binding region (H-T-H motif); it reads IREIGDAVGLTSTSSVAHQLR. Residues S156 and K193 each act as for autocatalytic cleavage activity in the active site.

Belongs to the peptidase S24 family. Homodimer.

It catalyses the reaction Hydrolysis of Ala-|-Gly bond in repressor LexA.. Represses a number of genes involved in the response to DNA damage (SOS response), including recA and lexA. In the presence of single-stranded DNA, RecA interacts with LexA causing an autocatalytic cleavage which disrupts the DNA-binding part of LexA, leading to derepression of the SOS regulon and eventually DNA repair. In Mycolicibacterium gilvum (strain PYR-GCK) (Mycobacterium gilvum (strain PYR-GCK)), this protein is LexA repressor.